Consider the following 572-residue polypeptide: Putative acyl-CoA synthetase CCNA_01223 (572 aa).

Belongs to the ATP-dependent AMP-binding enzyme family.

Its pathway is lipid metabolism; sphingolipid metabolism. In terms of biological role, involved in de novo bacterial ceramide synthesis. In Caulobacter vibrioides (strain NA1000 / CB15N) (Caulobacter crescentus), this protein is Putative acyl-CoA synthetase CCNA_01223.